A 190-amino-acid polypeptide reads, in one-letter code: Xanthine phosphoribosyltransferase (190 aa).

Leucine 20 and asparagine 27 together coordinate xanthine. 5-phospho-alpha-D-ribose 1-diphosphate is bound at residue 128-132; sequence ANGKA. A xanthine-binding site is contributed by lysine 156.

It belongs to the purine/pyrimidine phosphoribosyltransferase family. Xpt subfamily. As to quaternary structure, homodimer.

It localises to the cytoplasm. It catalyses the reaction XMP + diphosphate = xanthine + 5-phospho-alpha-D-ribose 1-diphosphate. Its pathway is purine metabolism; XMP biosynthesis via salvage pathway; XMP from xanthine: step 1/1. Functionally, converts the preformed base xanthine, a product of nucleic acid breakdown, to xanthosine 5'-monophosphate (XMP), so it can be reused for RNA or DNA synthesis. The polypeptide is Xanthine phosphoribosyltransferase (Pseudomonas fluorescens (strain Pf0-1)).